Here is a 472-residue protein sequence, read N- to C-terminus: Glutamate--tRNA ligase (472 aa).

The 'HIGH' region signature appears at 9 to 19 (PSPTGYLHVGG). Residues cysteine 98, cysteine 100, cysteine 125, and histidine 127 each coordinate Zn(2+). Residues 237 to 241 (KLSKR) carry the 'KMSKS' region motif. Lysine 240 contributes to the ATP binding site.

This sequence belongs to the class-I aminoacyl-tRNA synthetase family. Glutamate--tRNA ligase type 1 subfamily. In terms of assembly, monomer. It depends on Zn(2+) as a cofactor.

It localises to the cytoplasm. It catalyses the reaction tRNA(Glu) + L-glutamate + ATP = L-glutamyl-tRNA(Glu) + AMP + diphosphate. In terms of biological role, catalyzes the attachment of glutamate to tRNA(Glu) in a two-step reaction: glutamate is first activated by ATP to form Glu-AMP and then transferred to the acceptor end of tRNA(Glu). The polypeptide is Glutamate--tRNA ligase (Klebsiella pneumoniae subsp. pneumoniae (strain ATCC 700721 / MGH 78578)).